Reading from the N-terminus, the 2237-residue chain is Activating signal cointegrator 1 complex subunit 3-like (2237 aa).

Disordered stretches follow at residues 1 to 48, 71 to 118, 242 to 330, and 445 to 472; these read MSEE…RGEM, TIEK…KPID, DEEE…SKLI, and EKTI…DEIK. Positions 24–37 are enriched in basic and acidic residues; it reads ERNRSELKEPKGEP. The span at 79–97 shows a compositional bias: polar residues; sequence VNSSNDTYSTTKKVKNQNP. A compositionally biased stretch (low complexity) spans 105 to 114; the sequence is RKSNGNNNNE. A compositionally biased stretch (acidic residues) spans 242–282; it reads DEEEEEENLSDFEIRDDDDDDDDVDNNEVDDNNNNDSEAQD. Basic and acidic residues-rich tracts occupy residues 312–325 and 446–460; these read QKPD…DKNN and KTIE…DVEM. Residues 440–468 are a coiled coil; that stretch reads TAATTEKTIEKTESNKKDVEMKQQQQQQQ. The Helicase ATP-binding 1 domain occupies 561-745; sequence DCAFKTDNNL…FLRVEPDGVF (185 aa). ATP is bound at residue 574 to 581; sequence APTSSGKT. Positions 687 to 690 match the DEAH box motif; it reads DEIH. Residues 755-990 form the Helicase C-terminal 1 domain; sequence PLEQQYIGIS…TVRDAVNWLG (236 aa). Positions 1050–1356 constitute an SEC63 1 domain; the sequence is STELGKVASH…GAEYSLPISF (307 aa). The region spanning 1407–1584 is the Helicase ATP-binding 2 domain; that stretch reads NCMYQSNDNA…WIGATPQTCY (178 aa). Position 1420–1427 (1420–1427) interacts with ATP; it reads APTNSGKT. The DEAH box signature appears at 1526–1529; the sequence is DELH. Residues 1657 to 1832 form the Helicase C-terminal 2 domain; sequence TLTKPYLVCE…TITKKQDALD (176 aa). Residues 1892–2215 form the SEC63 2 domain; sequence PLNLGIIASY…GCDQEHELNI (324 aa).

The protein belongs to the helicase family.

In Dictyostelium discoideum (Social amoeba), this protein is Activating signal cointegrator 1 complex subunit 3-like (ascc3l).